Here is a 305-residue protein sequence, read N- to C-terminus: MPIKIPDSLPAKEVLTNENIFVMDEHRALHQDVRPLRIAILNLMPTKITTETQLLRLIGNTPIQVEIELLHPKTHVSKNTPEEHLTKFYKTFDEVKDEKFDGLIITGAPVEQMEFEEVNYWEELKKIMDWSVHNVYSTFHICWGAQAALYHHYGIKKYPLKEKMFGIFPHRICKPNTMLLRGFDDCFYAPHSRHTEVRREDIEKVGEIDILSDSEEAGVYIMKTRGGRQVFVTGHSEYDQFTLKEEYERDLAKGLKIKMPKNYFPDDDPTKPPVVNWRGHANLLFSNWLNYYVYQETPFDLNELK.

C142 functions as the Acyl-thioester intermediate in the catalytic mechanism. Residues K163 and S192 each coordinate substrate. H235 (proton acceptor) is an active-site residue. The active site involves E237. R249 is a substrate binding site.

Belongs to the MetA family.

The protein resides in the cytoplasm. It catalyses the reaction L-homoserine + acetyl-CoA = O-acetyl-L-homoserine + CoA. Its pathway is amino-acid biosynthesis; L-methionine biosynthesis via de novo pathway; O-acetyl-L-homoserine from L-homoserine: step 1/1. Its function is as follows. Transfers an acetyl group from acetyl-CoA to L-homoserine, forming acetyl-L-homoserine. This Acetivibrio thermocellus (strain ATCC 27405 / DSM 1237 / JCM 9322 / NBRC 103400 / NCIMB 10682 / NRRL B-4536 / VPI 7372) (Clostridium thermocellum) protein is Homoserine O-acetyltransferase.